The chain runs to 75 residues: Brevinin-2SN2 (75 aa).

Residues 1–22 (MFTMKKSLLFLFFLGTISLSFC) form the signal peptide. A propeptide spans 23–40 (EEERGADEDDGGEMTEEE) (removed in mature form). A disulfide bridge links C69 with C75.

This sequence belongs to the frog skin active peptide (FSAP) family. Brevinin subfamily. As to expression, expressed by the skin glands.

Its subcellular location is the secreted. Functionally, antimicrobial peptide. Active against some Gram-negative and a variety of Gram-positive bacterial strains. Active against fungus C.glabrata 090902 but not against C.albicans ATCC 10231. Shows hemolytic activity against human erythrocytes. This Sylvirana spinulosa (Fine-spined frog) protein is Brevinin-2SN2.